A 443-amino-acid polypeptide reads, in one-letter code: Packaging protein 1 (443 aa).

The segment at 1 to 75 (MSGAADGTVP…PEAAQPPPSR (75 aa)) is disordered. A compositionally biased stretch (basic and acidic residues) spans 13–56 (EDTHQEDSGERECEQRPVHSGREATGESDPALERPDHGERHGPE). Residue 169–176 (GPTGSGKS) participates in ATP binding. The DNA-binding stretch occupies residues 433 to 443 (VSYANKRKWYD).

The protein belongs to the adenoviridae packaging protein 1 family. Homodimer. Part of a genome packaging complex composed of packaging proteins 1, 2 and 3; this complex specifically binds to the packaging sequence on the left end of viral genomic DNA and performs packaging of the viral genome. Interacts with protein 33K.

It localises to the virion. It is found in the host nucleus. The protein localises to the host nucleoplasm. The protein resides in the host nucleolus. Functionally, component of the packaging machinery which encapsidates the viral DNA into preformed capsids and transcriptional activator of the viral major late promoter (MLP). Binds, along with packaging proteins 2 and 3, to the specific packaging sequence on the left end of viral genomic DNA and displays ATPase activity thereby providing the power stroke of the packaging machinery. The activity of packaging protein IVa2 is stimulated by protein 33K which acts as a terminase. May be the protein that pumps DNA into the capsid powered by ATP hydrolysis. Specifically binds to the 5'-CG-3' nucleotides of the repeats making up the packaging sequence. Component of the DEF-A and DEF-B transcription factors that bind downstream elements of the major late promoter (MLP), and stimulate transcription from the MLP after initiation of viral DNA replication. DEF-A is a heterodimer packaging proteins 1 and 2 and DEF-B is a homodimer of packaging protein 1. The sequence is that of Packaging protein 1 from Pantherophis guttatus (Corn snake).